We begin with the raw amino-acid sequence, 275 residues long: HUWE1-associated protein modifying stress responses 1 (275 aa).

Residues 32 to 44 are compositionally biased toward acidic residues; it reads AEQDEQLPPELQE. Residues 32-51 are disordered; that stretch reads AEQDEQLPPELQEEAAAAAQ. The segment at 80–152 is HUWE1-binding and HAPSTR1 oligomerization (HBO) domain; sequence QQPGLSLWVP…LISFLCGKVP (73 aa). Disordered stretches follow at residues 155–181, 204–227, and 250–275; these read RNSR…SSVE, SVRS…RRRN, and GTRK…NRMI. S167 is subject to Phosphoserine. The segment covering 172–181 has biased composition (low complexity); that stretch reads TSTETSSSVE. A compositionally biased stretch (polar residues) spans 204-216; sequence SVRSSTPGSPTHV. S212 bears the Phosphoserine mark.

This sequence belongs to the HAPSTR1 family. Homooligomer. Heterooligomer with HAPSTR2; the interaction is direct and stabilizes HAPSTR1. Interacts with HUWE1. Post-translationally, ubiquitinated by HUWE1. Promotes HAPSTR1 degradation through polyubiquitination.

Its subcellular location is the nucleus. The protein localises to the cytoplasm. Acts as a central player within a network of stress response pathways promoting cellular adaptability. The E3 ligase HUWE1 assists HAPSTR1 in controlling stress signaling and in turn, HUWE1 feeds back to promote the degradation of HAPSTR1. HAPSTR1 represents a central coordination mechanism for stress response programs. Functions as a negative regulator of TP53/P53 in the cellular response to telomere erosion and probably also DNA damage. May attenuate p53/TP53 activation through the E3 ubiquitin ligase HUWE1. This is HUWE1-associated protein modifying stress responses 1 from Homo sapiens (Human).